Consider the following 269-residue polypeptide: Shikimate dehydrogenase (NADP(+)) (269 aa).

Residues 17–19 (SKS) and T64 contribute to the shikimate site. Catalysis depends on K68, which acts as the Proton acceptor. D80 lines the NADP(+) pocket. Residues N89 and D105 each contribute to the shikimate site. NADP(+) is bound by residues 130–134 (GAGGA), 154–159 (NRTHAK), and M213. Y215 serves as a coordination point for shikimate. G237 lines the NADP(+) pocket.

Belongs to the shikimate dehydrogenase family. In terms of assembly, homodimer.

The catalysed reaction is shikimate + NADP(+) = 3-dehydroshikimate + NADPH + H(+). It participates in metabolic intermediate biosynthesis; chorismate biosynthesis; chorismate from D-erythrose 4-phosphate and phosphoenolpyruvate: step 4/7. Functionally, involved in the biosynthesis of the chorismate, which leads to the biosynthesis of aromatic amino acids. Catalyzes the reversible NADPH linked reduction of 3-dehydroshikimate (DHSA) to yield shikimate (SA). The chain is Shikimate dehydrogenase (NADP(+)) from Neisseria polysaccharea.